The chain runs to 177 residues: Large ribosomal subunit protein uL6 (177 aa).

It belongs to the universal ribosomal protein uL6 family. As to quaternary structure, part of the 50S ribosomal subunit.

Its function is as follows. This protein binds to the 23S rRNA, and is important in its secondary structure. It is located near the subunit interface in the base of the L7/L12 stalk, and near the tRNA binding site of the peptidyltransferase center. The protein is Large ribosomal subunit protein uL6 of Hydrogenovibrio crunogenus (strain DSM 25203 / XCL-2) (Thiomicrospira crunogena).